Reading from the N-terminus, the 123-residue chain is MALNNVSLSSGDQRSRVAYRSSHGDLRPRASALAMVSGDGFLVSRPEAIHLGPRQAVRPSVRAESRRVDGGGRSPREPDGRGRSRQARFSPYPIPAVEPDLLRSVLQQRLIALGGVIAARISV.

Over residues 1–12 the composition is skewed to polar residues; the sequence is MALNNVSLSSGD. Disordered regions lie at residues 1-25 and 53-91; these read MALNNVSLSSGDQRSRVAYRSSHGD and PRQAVRPSVRAESRRVDGGGRSPREPDGRGRSRQARFSP. The span at 61 to 82 shows a compositional bias: basic and acidic residues; it reads VRAESRRVDGGGRSPREPDGRG.

This is an uncharacterized protein from Homo sapiens (Human).